Reading from the N-terminus, the 363-residue chain is UDP-N-acetylglucosamine--N-acetylmuramyl-(pentapeptide) pyrophosphoryl-undecaprenol N-acetylglucosamine transferase (363 aa).

UDP-N-acetyl-alpha-D-glucosamine is bound by residues 10 to 12 (TAG), N124, R161, S195, and Q291.

Belongs to the glycosyltransferase 28 family. MurG subfamily.

The protein resides in the cell membrane. It catalyses the reaction di-trans,octa-cis-undecaprenyl diphospho-N-acetyl-alpha-D-muramoyl-L-alanyl-D-glutamyl-meso-2,6-diaminopimeloyl-D-alanyl-D-alanine + UDP-N-acetyl-alpha-D-glucosamine = di-trans,octa-cis-undecaprenyl diphospho-[N-acetyl-alpha-D-glucosaminyl-(1-&gt;4)]-N-acetyl-alpha-D-muramoyl-L-alanyl-D-glutamyl-meso-2,6-diaminopimeloyl-D-alanyl-D-alanine + UDP + H(+). The protein operates within cell wall biogenesis; peptidoglycan biosynthesis. Functionally, cell wall formation. Catalyzes the transfer of a GlcNAc subunit on undecaprenyl-pyrophosphoryl-MurNAc-pentapeptide (lipid intermediate I) to form undecaprenyl-pyrophosphoryl-MurNAc-(pentapeptide)GlcNAc (lipid intermediate II). In Streptomyces avermitilis (strain ATCC 31267 / DSM 46492 / JCM 5070 / NBRC 14893 / NCIMB 12804 / NRRL 8165 / MA-4680), this protein is UDP-N-acetylglucosamine--N-acetylmuramyl-(pentapeptide) pyrophosphoryl-undecaprenol N-acetylglucosamine transferase.